Here is a 345-residue protein sequence, read N- to C-terminus: Histidinol-phosphate aminotransferase (345 aa).

Lys205 is modified (N6-(pyridoxal phosphate)lysine).

Belongs to the class-II pyridoxal-phosphate-dependent aminotransferase family. Histidinol-phosphate aminotransferase subfamily. In terms of assembly, homodimer. Pyridoxal 5'-phosphate is required as a cofactor.

It carries out the reaction L-histidinol phosphate + 2-oxoglutarate = 3-(imidazol-4-yl)-2-oxopropyl phosphate + L-glutamate. Its pathway is amino-acid biosynthesis; L-histidine biosynthesis; L-histidine from 5-phospho-alpha-D-ribose 1-diphosphate: step 7/9. The protein is Histidinol-phosphate aminotransferase of Parabacteroides distasonis (strain ATCC 8503 / DSM 20701 / CIP 104284 / JCM 5825 / NCTC 11152).